The primary structure comprises 61 residues: MSDKKLKITQVRSIIGGTKKQKATIQALGLGRPHYTVERKDNPCTRGQIRVVQHLVKVEEV.

It belongs to the universal ribosomal protein uL30 family. As to quaternary structure, part of the 50S ribosomal subunit.

The protein is Large ribosomal subunit protein uL30 of Chlorobium luteolum (strain DSM 273 / BCRC 81028 / 2530) (Pelodictyon luteolum).